Consider the following 429-residue polypeptide: 3-phosphoshikimate 1-carboxyvinyltransferase (429 aa).

3-phosphoshikimate-binding residues include Lys-22, Ser-23, and Arg-27. Residue Lys-22 participates in phosphoenolpyruvate binding. 2 residues coordinate phosphoenolpyruvate: Gly-93 and Arg-122. Ser-168, Ser-169, Gln-170, Ser-196, Asp-311, and Lys-338 together coordinate 3-phosphoshikimate. Residue Gln-170 coordinates phosphoenolpyruvate. Asp-311 serves as the catalytic Proton acceptor. Arg-342 and Arg-384 together coordinate phosphoenolpyruvate.

It belongs to the EPSP synthase family. In terms of assembly, monomer.

The protein resides in the cytoplasm. It catalyses the reaction 3-phosphoshikimate + phosphoenolpyruvate = 5-O-(1-carboxyvinyl)-3-phosphoshikimate + phosphate. The protein operates within metabolic intermediate biosynthesis; chorismate biosynthesis. Its function is as follows. Catalyzes the transfer of the enolpyruvyl moiety of phosphoenolpyruvate (PEP) to the 5-hydroxyl of shikimate-3-phosphate (S3P) to produce enolpyruvyl shikimate-3-phosphate and inorganic phosphate. This is 3-phosphoshikimate 1-carboxyvinyltransferase from Methanocaldococcus jannaschii (strain ATCC 43067 / DSM 2661 / JAL-1 / JCM 10045 / NBRC 100440) (Methanococcus jannaschii).